A 161-amino-acid polypeptide reads, in one-letter code: Nucleotide-binding protein Reut_A2760 (161 aa).

Belongs to the YajQ family.

In terms of biological role, nucleotide-binding protein. The sequence is that of Nucleotide-binding protein Reut_A2760 from Cupriavidus pinatubonensis (strain JMP 134 / LMG 1197) (Cupriavidus necator (strain JMP 134)).